Consider the following 276-residue polypeptide: Homeobox-leucine zipper protein HOX11 (276 aa).

The tract at residues 1-92 (MVDGHLEAST…DDGGSARKKL (92 aa)) is disordered. Residues 39–48 (LSSSPNNSAG) show a composition bias toward polar residues. Residues 58–73 (HGLGGNDAAPGGGGGD) are compositionally biased toward gly residues. A DNA-binding region (homeobox) is located at residues 87–146 (SARKKLRLSKEQSAFLEESFKEHSTLNPKQKLALAKQLNLRPRQVEVWFQNRRARTKLKQ). Positions 145–189 (KQTEVDCEYLKRCCETLTEENRRLQKELAELRALKTVHPFYMHLP) are leucine-zipper. The disordered stretch occupies residues 214–244 (AATSSTAAPPAAPSSGGIAATSSSSAAAAAA).

Belongs to the HD-ZIP homeobox family. Class II subfamily. As to expression, expressed in stems, leaf sheaths and blades and panicles.

The protein localises to the nucleus. In terms of biological role, probable transcription factor. The polypeptide is Homeobox-leucine zipper protein HOX11 (HOX11) (Oryza sativa subsp. indica (Rice)).